A 301-amino-acid chain; its full sequence is Possible hemolysin C (301 aa).

CBS domains lie at 80–142 (MVPR…NGRL) and 145–202 (LIRK…IDDE).

The protein belongs to the UPF0053 family. Hemolysin C subfamily.

This Rickettsia akari (strain Hartford) protein is Possible hemolysin C (tlyC).